A 307-amino-acid polypeptide reads, in one-letter code: Taste receptor type 2 member 41 (307 aa).

Residues 1 to 7 (MQAALMA) lie on the Extracellular side of the membrane. The chain crosses the membrane as a helical span at residues 8-28 (FFMLLFSLLSLLGIAANGFIV). At 29 to 40 (LVLGREWLRYGR) the chain is on the cytoplasmic side. Residues 41–61 (LLPLDMILISLGASRXCLQLV) form a helical membrane-spanning segment. Residues 62–88 (GTVHNFYYSARKVEYSGGLGRQFFHLH) are Extracellular-facing. The chain crosses the membrane as a helical span at residues 89–109 (WHFLNSATFWFCSWLSVLFCV). The Cytoplasmic portion of the chain corresponds to 110-129 (KIANITHPTFLWLKWRFPGW). A helical transmembrane segment spans residues 130 to 150 (VPWLLLGSVLISFIITLLFFW). Residues 151–183 (VNYPVYQELLIRKFSGNMTYKWNTRIETYYFPS) are Extracellular-facing. Residue Asn167 is glycosylated (N-linked (GlcNAc...) asparagine). A helical transmembrane segment spans residues 184-204 (LKLVIWSIPFSVFLVSIMLLI). Over 205–234 (NSLRRHTQRMQHNGHSLQDPSTQAHTRALK) the chain is Cytoplasmic. A helical membrane pass occupies residues 235 to 255 (SLISFLFLYALSFLSLIIDAT). The Extracellular segment spans residues 256–264 (KFISMQNDF). Residues 265–285 (YWPWQIAVYLCISVHPFILIF) form a helical membrane-spanning segment. At 286–307 (SNLKLRSMFWQVLLLARGFWVA) the chain is on the cytoplasmic side.

Belongs to the G-protein coupled receptor T2R family.

The protein resides in the membrane. Functionally, receptor that may play a role in the perception of bitterness and is gustducin-linked. May play a role in sensing the chemical composition of the gastrointestinal content. The activity of this receptor may stimulate alpha gustducin, mediate PLC-beta-2 activation and lead to the gating of TRPM5. This chain is Taste receptor type 2 member 41 (TAS2R41), found in Gorilla gorilla gorilla (Western lowland gorilla).